The chain runs to 113 residues: Flagellar hook-basal body complex protein FliE (113 aa).

It belongs to the FliE family.

It is found in the bacterial flagellum basal body. The polypeptide is Flagellar hook-basal body complex protein FliE (Rhizobium etli (strain ATCC 51251 / DSM 11541 / JCM 21823 / NBRC 15573 / CFN 42)).